A 94-amino-acid chain; its full sequence is MANTVFCKKFQKEMEALDRAPLPGAKGQEILQNVSKQAWQEWQHLQTMLINEKQLNLMQSESRKYVMEQMDKFFNNEATDKLAGYVDPDDIKEL.

It belongs to the Fe(2+)-trafficking protein family.

Could be a mediator in iron transactions between iron acquisition and iron-requiring processes, such as synthesis and/or repair of Fe-S clusters in biosynthetic enzymes. The sequence is that of Probable Fe(2+)-trafficking protein from Marinomonas sp. (strain MWYL1).